The sequence spans 248 residues: Triosephosphate isomerase B (248 aa).

N11 and K13 together coordinate substrate. Catalysis depends on H95, which acts as the Electrophile. E165 serves as the catalytic Proton acceptor.

The protein belongs to the triosephosphate isomerase family. Homodimer.

Its subcellular location is the cytoplasm. The enzyme catalyses dihydroxyacetone phosphate = methylglyoxal + phosphate. It catalyses the reaction D-glyceraldehyde 3-phosphate = dihydroxyacetone phosphate. The protein operates within carbohydrate degradation; glycolysis; D-glyceraldehyde 3-phosphate from glycerone phosphate: step 1/1. It participates in carbohydrate biosynthesis; gluconeogenesis. In terms of biological role, triosephosphate isomerase is an extremely efficient metabolic enzyme that catalyzes the interconversion between dihydroxyacetone phosphate (DHAP) and D-glyceraldehyde-3-phosphate (G3P) in glycolysis and gluconeogenesis. Its function is as follows. It is also responsible for the non-negligible production of methylglyoxal a reactive cytotoxic side-product that modifies and can alter proteins, DNA and lipids. In Danio rerio (Zebrafish), this protein is Triosephosphate isomerase B (tpi1b).